The sequence spans 413 residues: Hemolin (413 aa).

The first 19 residues, 1-19 (MAFKSIAVLSACIIVGSAL), serve as a signal peptide directing secretion. 4 Ig-like C2-type domains span residues 25 to 112 (PVLK…RVIS), 122 to 211 (PAKT…EEVV), 233 to 322 (PQYV…LKLT), and 327 to 413 (PKYE…VQVN). Disulfide bonds link Cys46–Cys97, Cys140–Cys199, Cys252–Cys305, and Cys349–Cys395. Asn283 is a glycosylation site (N-linked (GlcNAc...) asparagine).

It belongs to the hemolin family. Hemolymph.

The protein resides in the secreted. It localises to the extracellular space. Functionally, insect-immune protein. Forms a protein complex at the bacterial surface. Can inhibit hemocyte aggregation. The protein is Hemolin of Hyalophora cecropia (Cecropia moth).